A 353-amino-acid polypeptide reads, in one-letter code: uncharacterized protein (353 aa).

The first 20 residues, 1-20, serve as a signal peptide directing secretion; the sequence is MLMRSVCFILLAVLLFSLSA. Residue Cys-21 is the site of N-palmitoyl cysteine attachment. The S-diacylglycerol cysteine moiety is linked to residue Cys-21.

It localises to the cell membrane. This is an uncharacterized protein from Bacillus subtilis (strain 168).